The sequence spans 463 residues: Ribosomal protein uS12 methylthiotransferase RimO (463 aa).

The 116-residue stretch at 15–130 folds into the MTTase N-terminal domain; it reads PKVGMVSLGC…VMQVVHSHLP (116 aa). Residues Cys-24, Cys-60, Cys-89, Cys-161, Cys-165, and Cys-168 each coordinate [4Fe-4S] cluster. Residues 147–392 enclose the Radical SAM core domain; that stretch reads LTPRHYAYLK…MEVAEEVSAA (246 aa). Residues 395–463 form the TRAM domain; sequence ERKVGKTLKV…ADGHDLWGEV (69 aa).

Belongs to the methylthiotransferase family. RimO subfamily. [4Fe-4S] cluster is required as a cofactor.

It localises to the cytoplasm. The enzyme catalyses L-aspartate(89)-[ribosomal protein uS12]-hydrogen + (sulfur carrier)-SH + AH2 + 2 S-adenosyl-L-methionine = 3-methylsulfanyl-L-aspartate(89)-[ribosomal protein uS12]-hydrogen + (sulfur carrier)-H + 5'-deoxyadenosine + L-methionine + A + S-adenosyl-L-homocysteine + 2 H(+). Functionally, catalyzes the methylthiolation of an aspartic acid residue of ribosomal protein uS12. The polypeptide is Ribosomal protein uS12 methylthiotransferase RimO (Burkholderia thailandensis (strain ATCC 700388 / DSM 13276 / CCUG 48851 / CIP 106301 / E264)).